The sequence spans 259 residues: Pimeloyl-[acyl-carrier protein] methyl ester esterase (259 aa).

Substrate is bound by residues W18, 78–79 (SL), and 139–143 (FLALD). Catalysis depends on S78, which acts as the Nucleophile. Active-site residues include D203 and H231. H231 is a binding site for substrate.

The protein belongs to the AB hydrolase superfamily. Carboxylesterase BioH family. As to quaternary structure, monomer.

It localises to the cytoplasm. The enzyme catalyses 6-carboxyhexanoyl-[ACP] methyl ester + H2O = 6-carboxyhexanoyl-[ACP] + methanol + H(+). The protein operates within cofactor biosynthesis; biotin biosynthesis. The physiological role of BioH is to remove the methyl group introduced by BioC when the pimeloyl moiety is complete. It allows to synthesize pimeloyl-ACP via the fatty acid synthetic pathway through the hydrolysis of the ester bonds of pimeloyl-ACP esters. The protein is Pimeloyl-[acyl-carrier protein] methyl ester esterase of Stenotrophomonas maltophilia (strain K279a).